Here is a 933-residue protein sequence, read N- to C-terminus: Anoctamin-7 (933 aa).

Residues 1–355 (MRMAATAWAG…YFAWLGFYTG (355 aa)) lie on the Cytoplasmic side of the membrane. The interval 43-101 (ETSSGSHCARSRMLRRRAQEEDSTVLIDVSPPEAEKRGSYGSTAHASEPGGQQAAACRA) is disordered. A helical transmembrane segment spans residues 356–376 (WLLPAAVVGTLVFLVGCFLVF). The Extracellular portion of the chain corresponds to 377–420 (SDIPTQELCGSKDSFEMCPLCLDCPFWLLSSACALAQAGRLFDH). The chain crosses the membrane as a helical span at residues 421–441 (GGTVFFSLFMALWAVLLLEYW). The Cytoplasmic portion of the chain corresponds to 442-499 (KRKSATLAYRWDCSDYEDTEERPRPQFAASAPMTAPNPITGEDEPYFPERSRARRMLA). The helical transmembrane segment at 500-520 (GSVVIVVMVAVVVMCLVSIIL) threads the bilayer. At 521–550 (YRAIMAIVVSRSGNTLLAAWASRIASLTGS) the chain is on the extracellular side. A helical membrane pass occupies residues 551–571 (VVNLVFILILSKIYVSLAHVL). Residues 572–588 (TRWEMHRTQTKFEDAFT) are Cytoplasmic-facing. Residues 589 to 609 (LKVFIFQFVNFYSSPVYIAFF) traverse the membrane as a helical segment. Over 610-714 (KGRFVGYPGN…FDEYLEMVLQ (105 aa)) the chain is Extracellular. A helical membrane pass occupies residues 715–735 (FGFVTIFVAACPLAPLFALLN). Over 736–763 (NWVEIRLDARKFVCEYRRPVAERAQDIG) the chain is Cytoplasmic. The helical transmembrane segment at 764–784 (IWFHILAGLTHLAVISNAFLL) threads the bilayer. Topologically, residues 785 to 843 (AFSSDFLPRAYYRWTRAHDLRGFLNFTLARAPSSFAAAHNRTCRYRAFRDDDGHYSQTY) are extracellular. 2 N-linked (GlcNAc...) asparagine glycosylation sites follow: N809 and N824. Residues 844–864 (WNLLAIRLAFVIVFEHVVFSV) traverse the membrane as a helical segment. The Cytoplasmic portion of the chain corresponds to 865 to 933 (GRLLDLLVPD…TVPKASQLQQ (69 aa)). The segment at 902-933 (GTNGTKDEQPEGSELSSHWTPFTVPKASQLQQ) is disordered. The span at 915–933 (ELSSHWTPFTVPKASQLQQ) shows a compositional bias: polar residues.

This sequence belongs to the anoctamin family. As to expression, specifically expressed in epithelial cells of the prostate (at protein level).

The protein resides in the cell membrane. Its subcellular location is the cell junction. It is found in the endoplasmic reticulum. The protein localises to the cytoplasm. It localises to the cytosol. The enzyme catalyses a 1,2-diacyl-sn-glycero-3-phospho-L-serine(in) = a 1,2-diacyl-sn-glycero-3-phospho-L-serine(out). It carries out the reaction a beta-D-galactosyl-(1&lt;-&gt;1')-N-acylsphing-4-enine(out) = a beta-D-galactosyl-(1&lt;-&gt;1')-N-acylsphing-4-enine(in). It catalyses the reaction a 1,2-diacyl-sn-glycero-3-phosphocholine(in) = a 1,2-diacyl-sn-glycero-3-phosphocholine(out). In terms of biological role, has calcium-dependent phospholipid scramblase activity; scrambles phosphatidylserine, phosphatidylcholine and galactosylceramide. Does not exhibit calcium-activated chloride channel (CaCC) activity. May play a role in cell-cell interactions. The chain is Anoctamin-7 (ANO7) from Homo sapiens (Human).